Consider the following 452-residue polypeptide: Zinc finger protein GAI-ASSOCIATED FACTOR 1 (452 aa).

Polar residues predominate over residues 1-32 (MPVDLDNSSTVSGEASVSISSTGNQNPLPNST). Residues 1–47 (MPVDLDNSSTVSGEASVSISSTGNQNPLPNSTGKKKRNLPGMPDPES) are disordered. S53 carries the post-translational modification Phosphoserine. C2H2-type zinc fingers lie at residues 63-85 (FVCE…RRGH) and 104-134 (YVCP…CRKH). A Nuclear localization signal motif is present at residues 126 to 133 (IKKHFCRK). The segment at 139 to 162 (WKCDKCSKKYAVQSDWKAHSKICG) adopts a C2H2-type 2; degenerate zinc-finger fold. Zn(2+) is bound by residues C141, C144, H157, C161, C168, C170, H183, and C187. The segment at 166-189 (YKCDCGTLFSRRDSFITHRAFCDA) adopts a CCHC-type 2; atypical zinc-finger fold. The interval 176–188 (RRDSFITHRAFCD) is SHR-binding. The interval 196–254 (RSHHSQSKKQNPEILTRKNPVPNPVPAPVDTESAKIKSSSTLTIKQSESPKTPPEIVQE) is disordered. The span at 231 to 245 (IKSSSTLTIKQSESP) shows a compositional bias: polar residues.

Interacts with the DELLA proteins (e.g. GAI/RGA2, RGA, RGL1, RGL2 and RGLG3), acting as coactivators and with TPR1 and TPR4, acting as a corepressors, at the promoter of GA20OX2 gene. As to expression, observed in vegetative tissues. Mainly expressed in hypocotyls, petioles, shoot apices, root tips, and trichomes, and, at low levels, in leaves, stems and flowers.

It is found in the nucleus. Transcription activation is repressed by gibberellic acid GA(3) in the presence of TPR4. Functionally, transcription factor that acts as a positive regulator of gibberellin (GA) action, homeostasis and signaling. GA converts the GAF1 complex from transcriptional activator to repressor via the degradation of DELLA proteins. This chain is Zinc finger protein GAI-ASSOCIATED FACTOR 1, found in Arabidopsis thaliana (Mouse-ear cress).